The primary structure comprises 386 residues: S-adenosylmethionine synthase (386 aa).

Position 8 (Glu8) interacts with Mg(2+). His14 is an ATP binding site. Glu42 contacts K(+). L-methionine is bound by residues Glu55 and Gln98. ATP contacts are provided by residues Asp166–Lys168, Ser234–Phe237, Asp245, Arg251–Lys252, Ala268, Lys272, and Lys276. Asp245 lines the L-methionine pocket. Position 276 (Lys276) interacts with L-methionine.

It belongs to the AdoMet synthase family. Homotetramer. Requires Mn(2+) as cofactor. It depends on Mg(2+) as a cofactor. Co(2+) is required as a cofactor. K(+) serves as cofactor.

It localises to the cytoplasm. The catalysed reaction is L-methionine + ATP + H2O = S-adenosyl-L-methionine + phosphate + diphosphate. The protein operates within amino-acid biosynthesis; S-adenosyl-L-methionine biosynthesis; S-adenosyl-L-methionine from L-methionine: step 1/1. Its function is as follows. Catalyzes the formation of S-adenosylmethionine from methionine and ATP. The reaction comprises two steps that are both catalyzed by the same enzyme: formation of S-adenosylmethionine (AdoMet) and triphosphate, and subsequent hydrolysis of the triphosphate. The protein is S-adenosylmethionine synthase (METK) of Ostreococcus tauri.